The following is a 606-amino-acid chain: Urocanate reductase (606 aa).

The tat-type signal signal peptide spans 1–40; that stretch reads MSNLSRRNFITGGAIAALGGTLAIAGCAPKGESSSTVAGA. Thr-111 bears the FMN phosphoryl threonine mark. FAD is bound by residues Ala-163, Glu-182, Thr-191, Gly-195, Gly-196, Ala-197, Ala-305, and Asp-373. Arg-433 (proton donor) is an active-site residue. FAD is bound by residues Glu-572 and Ile-588.

The protein belongs to the FAD-dependent oxidoreductase 2 family. FRD/SDH subfamily. FAD serves as cofactor. It depends on FMN as a cofactor. Predicted to be exported by the Tat system. The position of the signal peptide cleavage has not been experimentally proven.

The catalysed reaction is dihydrourocanate + A = urocanate + AH2. Functionally, catalyzes the two-electron reduction of urocanate to dihydrourocanate (also named imidazole propionate or deamino-histidine). Dihydrourocanate is present at higher concentrations in subjects with type 2 diabetes, and directly impairs glucose tolerance and insulin signaling at the level of insulin receptor substrate (IRS) through activation of p38 gamma (MAPK12)-p62-mTORC1. Therefore, the UrdA enzyme from the gut bacteria E.lenta strain DSM 2243 may contribute to the pathogenesis of type 2 diabetes by producing the microbial metabolite dihydrourocanate. This Eggerthella lenta (strain ATCC 25559 / DSM 2243 / CCUG 17323 / JCM 9979 / KCTC 3265 / NCTC 11813 / VPI 0255 / 1899 B) (Eubacterium lentum) protein is Urocanate reductase.